Here is a 620-residue protein sequence, read N- to C-terminus: Guanylate-binding protein 3 (620 aa).

Residues 1–304 (MEAPICLVEN…NAINSGTVPC (304 aa)) are GTPase domain (Globular). Positions 29–271 (AQPLVVVAIV…FCSYIFTNGK (243 aa)) constitute a GB1/RHD3-type G domain. Residues 39–46 (GLYRTGKS), 61–63 (LGS), and 91–95 (DTEGL) each bind GTP. Coiled coils occupy residues 375 to 411 (KKLV…SESL) and 477 to 582 (DGER…TRRK).

Belongs to the TRAFAC class dynamin-like GTPase superfamily. GB1/RHD3 GTPase family. GB1 subfamily. In terms of assembly, heterodimer with other family members, including GBP1, GBP2 and GBP5. Dimerization regulates subcellular location. Brain, lung, heart, spleen, kidney, liver and intestine.

It localises to the cytoplasm. The protein localises to the perinuclear region. Its subcellular location is the golgi apparatus membrane. The catalysed reaction is GTP + H2O = GDP + phosphate + H(+). Its function is as follows. Interferon (IFN)-inducible GTPase that plays important roles in innate immunity against a diverse range of bacterial, viral and protozoan pathogens. Hydrolyzes GTP very efficiently; GDP rather than GMP is the major reaction product. Following infection, recruited to the pathogen-containing vacuoles or vacuole-escaped bacteria and acts as a positive regulator of inflammasome assembly by promoting the release of inflammasome ligands from bacteria. Acts by promoting lysis of pathogen-containing vacuoles, releasing pathogens into the cytosol. Following pathogen release in the cytosol, promotes recruitment of proteins that mediate bacterial cytolysis, such as Gm12250/Irgb10: this liberates ligands that are detected by inflammasomes, such as lipopolysaccharide (LPS) that activates the non-canonical CASP4/CASP11 inflammasome or double-stranded DNA (dsDNA) that activates the AIM2 inflammasome. May play a role in erythroid differentiation. The sequence is that of Guanylate-binding protein 3 from Mus musculus (Mouse).